A 482-amino-acid polypeptide reads, in one-letter code: Probable cytosol aminopeptidase (482 aa).

The Mn(2+) site is built by K251 and D256. K263 is an active-site residue. Positions 274, 333, and 335 each coordinate Mn(2+). R337 is a catalytic residue.

The protein belongs to the peptidase M17 family. Mn(2+) is required as a cofactor.

It localises to the cytoplasm. It catalyses the reaction Release of an N-terminal amino acid, Xaa-|-Yaa-, in which Xaa is preferably Leu, but may be other amino acids including Pro although not Arg or Lys, and Yaa may be Pro. Amino acid amides and methyl esters are also readily hydrolyzed, but rates on arylamides are exceedingly low.. It carries out the reaction Release of an N-terminal amino acid, preferentially leucine, but not glutamic or aspartic acids.. In terms of biological role, presumably involved in the processing and regular turnover of intracellular proteins. Catalyzes the removal of unsubstituted N-terminal amino acids from various peptides. The protein is Probable cytosol aminopeptidase of Acinetobacter baumannii (strain SDF).